The primary structure comprises 1328 residues: DNA-directed RNA polymerase subunit beta (1328 aa).

Belongs to the RNA polymerase beta chain family. The RNAP catalytic core consists of 2 alpha, 1 beta, 1 beta' and 1 omega subunit. When a sigma factor is associated with the core the holoenzyme is formed, which can initiate transcription.

The enzyme catalyses RNA(n) + a ribonucleoside 5'-triphosphate = RNA(n+1) + diphosphate. Functionally, DNA-dependent RNA polymerase catalyzes the transcription of DNA into RNA using the four ribonucleoside triphosphates as substrates. The polypeptide is DNA-directed RNA polymerase subunit beta (Karelsulcia muelleri (strain GWSS) (Sulcia muelleri)).